An 84-amino-acid chain; its full sequence is Cytochrome b559 subunit alpha (84 aa).

The Cytoplasmic segment spans residues alanine 2 to tryptophan 20. The chain crosses the membrane as a helical span at residues valine 21–tryptophan 35. Heme is bound at residue histidine 23. Residues leucine 36–lysine 84 are Lumenal-facing.

It belongs to the PsbE/PsbF family. As to quaternary structure, heterodimer of an alpha subunit and a beta subunit. PSII is composed of 1 copy each of membrane proteins PsbA, PsbB, PsbC, PsbD, PsbE, PsbF, PsbH, PsbI, PsbJ, PsbK, PsbL, PsbM, PsbT, PsbX, PsbY, PsbZ, Psb30/Ycf12, peripheral proteins PsbO, CyanoQ (PsbQ), PsbU, PsbV and a large number of cofactors. It forms dimeric complexes. The cofactor is heme b.

Its subcellular location is the cellular thylakoid membrane. In terms of biological role, this b-type cytochrome is tightly associated with the reaction center of photosystem II (PSII). PSII is a light-driven water:plastoquinone oxidoreductase that uses light energy to abstract electrons from H(2)O, generating O(2) and a proton gradient subsequently used for ATP formation. It consists of a core antenna complex that captures photons, and an electron transfer chain that converts photonic excitation into a charge separation. The polypeptide is Cytochrome b559 subunit alpha (Thermostichus vulcanus (Synechococcus vulcanus)).